We begin with the raw amino-acid sequence, 159 residues long: Small ribosomal subunit protein uS7 (159 aa).

Belongs to the universal ribosomal protein uS7 family. As to quaternary structure, part of the 30S ribosomal subunit. Contacts proteins S9 and S11.

In terms of biological role, one of the primary rRNA binding proteins, it binds directly to 16S rRNA where it nucleates assembly of the head domain of the 30S subunit. Is located at the subunit interface close to the decoding center, probably blocks exit of the E-site tRNA. The protein is Small ribosomal subunit protein uS7 of Sulfurihydrogenibium sp. (strain YO3AOP1).